The primary structure comprises 141 residues: Large ribosomal subunit protein uL11 (141 aa).

Belongs to the universal ribosomal protein uL11 family. As to quaternary structure, part of the ribosomal stalk of the 50S ribosomal subunit. Interacts with L10 and the large rRNA to form the base of the stalk. L10 forms an elongated spine to which L12 dimers bind in a sequential fashion forming a multimeric L10(L12)X complex. One or more lysine residues are methylated.

Functionally, forms part of the ribosomal stalk which helps the ribosome interact with GTP-bound translation factors. The sequence is that of Large ribosomal subunit protein uL11 from Picosynechococcus sp. (strain ATCC 27264 / PCC 7002 / PR-6) (Agmenellum quadruplicatum).